Here is a 510-residue protein sequence, read N- to C-terminus: Probable lipid II flippase MurJ (510 aa).

Transmembrane regions (helical) follow at residues 13 to 33 (DVVI…LFAN), 81 to 101 (GLVS…AALF), 130 to 150 (FPYL…NTIG), 154 to 174 (VMSF…LFLA), 182 to 202 (LALA…QIPF), 240 to 260 (INLL…ISWL), 266 to 286 (LLEF…LPTL), 315 to 335 (IFLL…PMLL), 357 to 377 (AFNA…GYYA), 396 to 416 (MGFN…ASAM), 443 to 463 (VFFV…WYYV), and 481 to 501 (LVWL…LLGV).

Belongs to the MurJ/MviN family.

Its subcellular location is the cell inner membrane. Its pathway is cell wall biogenesis; peptidoglycan biosynthesis. In terms of biological role, involved in peptidoglycan biosynthesis. Transports lipid-linked peptidoglycan precursors from the inner to the outer leaflet of the cytoplasmic membrane. The protein is Probable lipid II flippase MurJ of Haemophilus influenzae (strain ATCC 51907 / DSM 11121 / KW20 / Rd).